A 379-amino-acid polypeptide reads, in one-letter code: Multicilin (379 aa).

Residues 1–129 (MQACEGSAAG…AMDDLIADSS (129 aa)) are necessary and sufficient for its degradation during the cell cycle. Disordered stretches follow at residues 26 to 71 (SRRT…APLP) and 88 to 107 (LGTEASPSGDSSASQNPSLQ). The segment covering 92–107 (ASPSGDSSASQNPSLQ) has biased composition (polar residues). The tract at residues 130–379 (SLMSPPLTNS…GGYKFRWVPS (250 aa)) is necessary and sufficient for proper nuclear localization. The segment at 171-241 (PPPTEQYWKE…SVLDKLMITQ (71 aa)) is necessary and sufficient for interaction with GMNN and sufficient for homodimerization. Positions 175-223 (EQYWKEVADQNQRALGTALIENNQLHVTLTQKQEEIASLRERNVQLKEL) form a coiled coil. Over residues 291–309 (NRDPKRPRLQPEPDSKDCS) the composition is skewed to basic and acidic residues. Positions 291 to 312 (NRDPKRPRLQPEPDSKDCSSRN) are disordered.

The protein belongs to the geminin family. Heterodimer (via coiled-coil domain) with GMNN (via coiled-coil domain); targets GMNN to the nucleus. Can form homodimers (in vitro, via coiled-coil domain), but these are much less stable than the heterodimer formed with GMNN.

Its subcellular location is the nucleus. Its function is as follows. Transcription regulator specifically required for multiciliate cell differentiation. Acts in a multiprotein complex containing E2F4 and E2F5 that binds and activates genes required for centriole biogenesis. Required for the deuterosome-mediated acentriolar pathway. Plays a role in mitotic cell cycle progression by promoting cell cycle exit. Modulates GMNN activity by reducing its affinity for CDT1. The sequence is that of Multicilin (Mcidas) from Mus musculus (Mouse).